We begin with the raw amino-acid sequence, 216 residues long: Phosphatidylserine decarboxylase proenzyme (216 aa).

Residue Ser-182 is the Schiff-base intermediate with substrate; via pyruvic acid of the active site. Ser-182 is subject to Pyruvic acid (Ser); by autocatalysis.

It belongs to the phosphatidylserine decarboxylase family. PSD-A subfamily. In terms of assembly, heterodimer of a large membrane-associated beta subunit and a small pyruvoyl-containing alpha subunit. It depends on pyruvate as a cofactor. Post-translationally, is synthesized initially as an inactive proenzyme. Formation of the active enzyme involves a self-maturation process in which the active site pyruvoyl group is generated from an internal serine residue via an autocatalytic post-translational modification. Two non-identical subunits are generated from the proenzyme in this reaction, and the pyruvate is formed at the N-terminus of the alpha chain, which is derived from the carboxyl end of the proenzyme. The post-translation cleavage follows an unusual pathway, termed non-hydrolytic serinolysis, in which the side chain hydroxyl group of the serine supplies its oxygen atom to form the C-terminus of the beta chain, while the remainder of the serine residue undergoes an oxidative deamination to produce ammonia and the pyruvoyl prosthetic group on the alpha chain.

The protein localises to the cell membrane. The catalysed reaction is a 1,2-diacyl-sn-glycero-3-phospho-L-serine + H(+) = a 1,2-diacyl-sn-glycero-3-phosphoethanolamine + CO2. The protein operates within phospholipid metabolism; phosphatidylethanolamine biosynthesis; phosphatidylethanolamine from CDP-diacylglycerol: step 2/2. Its function is as follows. Catalyzes the formation of phosphatidylethanolamine (PtdEtn) from phosphatidylserine (PtdSer). The sequence is that of Phosphatidylserine decarboxylase proenzyme from Burkholderia pseudomallei (strain 1106a).